A 192-amino-acid polypeptide reads, in one-letter code: Peptidyl-tRNA hydrolase (192 aa).

Y18 lines the tRNA pocket. The Proton acceptor role is filled by H23. F69, N71, and N117 together coordinate tRNA.

Belongs to the PTH family. Monomer.

Its subcellular location is the cytoplasm. It catalyses the reaction an N-acyl-L-alpha-aminoacyl-tRNA + H2O = an N-acyl-L-amino acid + a tRNA + H(+). Functionally, hydrolyzes ribosome-free peptidyl-tRNAs (with 1 or more amino acids incorporated), which drop off the ribosome during protein synthesis, or as a result of ribosome stalling. In terms of biological role, catalyzes the release of premature peptidyl moieties from peptidyl-tRNA molecules trapped in stalled 50S ribosomal subunits, and thus maintains levels of free tRNAs and 50S ribosomes. The protein is Peptidyl-tRNA hydrolase of Neisseria meningitidis serogroup C (strain 053442).